A 91-amino-acid chain; its full sequence is Large ribosomal subunit protein bL27 (91 aa).

Positions 1 to 25 are disordered; it reads MAHKKGAASSNNGRDSESKRLGVKR.

The protein belongs to the bacterial ribosomal protein bL27 family.

In Corynebacterium kroppenstedtii (strain DSM 44385 / JCM 11950 / CIP 105744 / CCUG 35717), this protein is Large ribosomal subunit protein bL27.